A 404-amino-acid polypeptide reads, in one-letter code: Argininosuccinate synthase (404 aa).

ATP is bound by residues 10 to 18 and Ala-38; that span reads AYSGGVDTS. L-citrulline is bound at residue Tyr-89. Residue Gly-119 coordinates ATP. The L-aspartate site is built by Thr-121, Asn-125, and Asp-126. Residue Asn-125 coordinates L-citrulline. L-citrulline-binding residues include Arg-129, Ser-177, Ser-186, Glu-262, and Tyr-274.

Belongs to the argininosuccinate synthase family. Type 1 subfamily. In terms of assembly, homotetramer.

It localises to the cytoplasm. The enzyme catalyses L-citrulline + L-aspartate + ATP = 2-(N(omega)-L-arginino)succinate + AMP + diphosphate + H(+). Its pathway is amino-acid biosynthesis; L-arginine biosynthesis; L-arginine from L-ornithine and carbamoyl phosphate: step 2/3. This Prochlorococcus marinus subsp. pastoris (strain CCMP1986 / NIES-2087 / MED4) protein is Argininosuccinate synthase.